A 288-amino-acid polypeptide reads, in one-letter code: Bifunctional protein FolD (288 aa).

Residues 166–168 (GAS) and Ile-232 each bind NADP(+).

It belongs to the tetrahydrofolate dehydrogenase/cyclohydrolase family. Homodimer.

The catalysed reaction is (6R)-5,10-methylene-5,6,7,8-tetrahydrofolate + NADP(+) = (6R)-5,10-methenyltetrahydrofolate + NADPH. It catalyses the reaction (6R)-5,10-methenyltetrahydrofolate + H2O = (6R)-10-formyltetrahydrofolate + H(+). Its pathway is one-carbon metabolism; tetrahydrofolate interconversion. Functionally, catalyzes the oxidation of 5,10-methylenetetrahydrofolate to 5,10-methenyltetrahydrofolate and then the hydrolysis of 5,10-methenyltetrahydrofolate to 10-formyltetrahydrofolate. The protein is Bifunctional protein FolD of Escherichia coli (strain UTI89 / UPEC).